Reading from the N-terminus, the 680-residue chain is DNA-directed RNA polymerase subunit beta' (680 aa).

Zn(2+) contacts are provided by Cys69, Cys71, Cys87, and Cys90. Mg(2+)-binding residues include Asp489, Asp491, and Asp493.

It belongs to the RNA polymerase beta' chain family. RpoC1 subfamily. As to quaternary structure, in plastids the minimal PEP RNA polymerase catalytic core is composed of four subunits: alpha, beta, beta', and beta''. When a (nuclear-encoded) sigma factor is associated with the core the holoenzyme is formed, which can initiate transcription. Mg(2+) serves as cofactor. Requires Zn(2+) as cofactor.

The protein resides in the plastid. It localises to the chloroplast. The catalysed reaction is RNA(n) + a ribonucleoside 5'-triphosphate = RNA(n+1) + diphosphate. DNA-dependent RNA polymerase catalyzes the transcription of DNA into RNA using the four ribonucleoside triphosphates as substrates. In Arabidopsis thaliana (Mouse-ear cress), this protein is DNA-directed RNA polymerase subunit beta'.